The following is a 506-amino-acid chain: Proline--tRNA ligase (506 aa).

Belongs to the class-II aminoacyl-tRNA synthetase family. ProS type 3 subfamily. As to quaternary structure, homodimer.

The protein resides in the cytoplasm. The enzyme catalyses tRNA(Pro) + L-proline + ATP = L-prolyl-tRNA(Pro) + AMP + diphosphate. Catalyzes the attachment of proline to tRNA(Pro) in a two-step reaction: proline is first activated by ATP to form Pro-AMP and then transferred to the acceptor end of tRNA(Pro). This chain is Proline--tRNA ligase, found in Rhodopirellula baltica (strain DSM 10527 / NCIMB 13988 / SH1).